Here is an 882-residue protein sequence, read N- to C-terminus: Protein translocase subunit SecA (882 aa).

ATP contacts are provided by residues glutamine 79, 97–101 (GEGKT), and aspartate 487.

This sequence belongs to the SecA family.

It is found in the plastid. Its subcellular location is the chloroplast stroma. The protein localises to the chloroplast thylakoid membrane. It catalyses the reaction ATP + H2O + cellular proteinSide 1 = ADP + phosphate + cellular proteinSide 2.. Functionally, has a central role in coupling the hydrolysis of ATP to the transfer of proteins across the thylakoid membrane. The protein is Protein translocase subunit SecA of Gracilaria tenuistipitata var. liui (Red alga).